A 291-amino-acid polypeptide reads, in one-letter code: Potassium-transporting ATPase subunit beta (291 aa).

Residues 1-36 (MAALQEKKTCGQRMEEFQRYCWNPDTGQMLGRTLSR) lie on the Cytoplasmic side of the membrane. A helical; Signal-anchor for type II membrane protein membrane pass occupies residues 37–57 (WVWISLYYVAFYVVMTGLFAL). At 58–291 (CLYVLMQTVD…KVEFKLKIEK (234 aa)) the chain is on the extracellular side. N-linked (GlcNAc...) asparagine glycosylation is found at Asn99, Asn103, Asn130, Asn146, and Asn161. A disulfide bridge connects residues Cys131 and Cys152. A disulfide bond links Cys162 and Cys178. N-linked (GlcNAc...) asparagine glycans are attached at residues Asn193 and Asn222. The segment at 194-291 (GSAPRVDCAF…KVEFKLKIEK (98 aa)) is immunoglobulin-like. The cysteines at positions 201 and 263 are disulfide-linked.

It belongs to the X(+)/potassium ATPases subunit beta family. The ATPase pump is composed of two subunits: alpha (catalytic) and beta (regulatory). Interacts with alpha subunit ATP12A; this interaction is required for the formation of a functionally active pump and targeting at the plasma membrane. Interacts (via N-terminus) with alpha subunit ATP4A (via the P-domain). Post-translationally, N-glycosylation is necessary for assembly and functional expression of the pump at the plasma membrane.

Its subcellular location is the apical cell membrane. The protein resides in the cell membrane. Functionally, the beta subunit of the gastric H(+)/K(+) ATPase pump which transports H(+) ions in exchange for K(+) ions across the apical membrane of parietal cells. Plays a structural and regulatory role in the assembly and membrane targeting of a functionally active pump. Within a transport cycle, the transfer of a H(+) ion across the membrane is coupled to ATP hydrolysis and is associated with a transient phosphorylation of the alpha subunit that shifts the pump conformation from inward-facing (E1) to outward-facing state (E2). Interacts with the phosphorylation domain of the alpha subunit and functions as a ratchet, stabilizing the lumenal-open E2 conformation and preventing the reverse reaction of the transport cycle. In Homo sapiens (Human), this protein is Potassium-transporting ATPase subunit beta.